The sequence spans 706 residues: UvrABC system protein C (706 aa).

A GIY-YIG domain is found at 16 to 95 (VEPGVYRFRD…IKEFDPRFNV (80 aa)). Residues 208–243 (DRLAKDMEQQMTAAAEQLDFERAARLRDDISALKRA) form the UVR domain. The interval 651-706 (APQNGTAPDPAPGTGDPQTPADPHSAATAADIEDDRHATGATGPQMNGSEQQVDRV) is disordered. The segment covering 692–706 (TGPQMNGSEQQVDRV) has biased composition (polar residues).

This sequence belongs to the UvrC family. As to quaternary structure, interacts with UvrB in an incision complex.

The protein localises to the cytoplasm. Functionally, the UvrABC repair system catalyzes the recognition and processing of DNA lesions. UvrC both incises the 5' and 3' sides of the lesion. The N-terminal half is responsible for the 3' incision and the C-terminal half is responsible for the 5' incision. This is UvrABC system protein C from Mycolicibacterium smegmatis (strain ATCC 700084 / mc(2)155) (Mycobacterium smegmatis).